The primary structure comprises 78 residues: MKVSSHEMVPTHEIIPREEIPLLLEKYNIKLQQLPKLLDTDPLVLETEATPGDVLKITRMSPTAGESTYYRLVIATSL.

Belongs to the archaeal Rpo5/eukaryotic RPB5 RNA polymerase subunit family. In terms of assembly, part of the RNA polymerase complex.

The protein localises to the cytoplasm. The catalysed reaction is RNA(n) + a ribonucleoside 5'-triphosphate = RNA(n+1) + diphosphate. Functionally, DNA-dependent RNA polymerase (RNAP) catalyzes the transcription of DNA into RNA using the four ribonucleoside triphosphates as substrates. This chain is DNA-directed RNA polymerase subunit Rpo5, found in Methanococcus maripaludis (strain C6 / ATCC BAA-1332).